The following is a 624-amino-acid chain: Phosphatidylinositol 4-kinase lsb6 (624 aa).

Residues 1 to 31 (MESTFHSDTLDSFPNYQENSLNTNEEQTNPL) are compositionally biased toward polar residues. The tract at residues 1–53 (MESTFHSDTLDSFPNYQENSLNTNEEQTNPLESLRDGWASSNSSSSSSLLLPD) is disordered. Positions 40–51 (SSNSSSSSSLLL) are enriched in low complexity. Residues 145–520 (GVFPVLISKG…LLELPNLYVV (376 aa)) enclose the PI3K/PI4K catalytic domain. The segment at 151 to 157 (ISKGSSG) is G-loop. The catalytic loop stretch occupies residues 346 to 354 (RNTDRNLDN). Residues 409–429 (AIDNSLAFPYKHPDSWRSFPY) are activation loop.

This sequence belongs to the PI3/PI4-kinase family. Mg(2+) serves as cofactor. It depends on Mn(2+) as a cofactor.

The protein localises to the cell membrane. The protein resides in the vacuole membrane. Its subcellular location is the golgi apparatus membrane. The enzyme catalyses a 1,2-diacyl-sn-glycero-3-phospho-(1D-myo-inositol) + ATP = a 1,2-diacyl-sn-glycero-3-phospho-(1D-myo-inositol 4-phosphate) + ADP + H(+). Functionally, may play a role in endocytic and/or exocytic pathways. In Schizosaccharomyces pombe (strain 972 / ATCC 24843) (Fission yeast), this protein is Phosphatidylinositol 4-kinase lsb6 (lsb6).